A 478-amino-acid polypeptide reads, in one-letter code: Protein nucleotidyltransferase YdiU (478 aa).

Positions 84, 86, 87, 107, 119, 120, 170, and 177 each coordinate ATP. D246 functions as the Proton acceptor in the catalytic mechanism. Residues N247 and D256 each contribute to the Mg(2+) site. ATP is bound at residue D256.

It belongs to the SELO family. Mg(2+) serves as cofactor. The cofactor is Mn(2+).

It carries out the reaction L-seryl-[protein] + ATP = 3-O-(5'-adenylyl)-L-seryl-[protein] + diphosphate. The catalysed reaction is L-threonyl-[protein] + ATP = 3-O-(5'-adenylyl)-L-threonyl-[protein] + diphosphate. The enzyme catalyses L-tyrosyl-[protein] + ATP = O-(5'-adenylyl)-L-tyrosyl-[protein] + diphosphate. It catalyses the reaction L-histidyl-[protein] + UTP = N(tele)-(5'-uridylyl)-L-histidyl-[protein] + diphosphate. It carries out the reaction L-seryl-[protein] + UTP = O-(5'-uridylyl)-L-seryl-[protein] + diphosphate. The catalysed reaction is L-tyrosyl-[protein] + UTP = O-(5'-uridylyl)-L-tyrosyl-[protein] + diphosphate. In terms of biological role, nucleotidyltransferase involved in the post-translational modification of proteins. It can catalyze the addition of adenosine monophosphate (AMP) or uridine monophosphate (UMP) to a protein, resulting in modifications known as AMPylation and UMPylation. This is Protein nucleotidyltransferase YdiU from Escherichia coli O7:K1 (strain IAI39 / ExPEC).